Here is a 320-residue protein sequence, read N- to C-terminus: MDMATGAKEVVVVEAYEYEFDLENPFTSPADEPIASLLDAEGHHSPSVSAAASAARREAAGFISKVRYDGELDVHPRVAYLALNYVDRYLSKRQLACERNPWAPRLLAISCLTLAAKMQRAAAISAADIQRGEEFMFDEAKIQRMEQMVLNALEWRTRSVTPLAFLGFFLSACFPQPRHPALLDAIKARAVDLLLRVQPEVKMAEFSPSVAAAAALLAAAGEVAGAHLLGFEAGVAACPFVNSEKLRECGEVMAAACGVGPSWAAAATSAETPVTVLGHHRSASSESERTTTVGSAANSADAKRRCMGPPRQWGVGGPDE.

Residues 279–320 (HHRSASSESERTTTVGSAANSADAKRRCMGPPRQWGVGGPDE) are disordered.

It belongs to the cyclin family. Cyclin D subfamily.

In Oryza sativa subsp. japonica (Rice), this protein is Cyclin-D6-1 (CYCD6-1).